A 238-amino-acid chain; its full sequence is Ribosomal RNA small subunit methyltransferase G (238 aa).

S-adenosyl-L-methionine contacts are provided by residues Gly-106, Leu-111, 157 to 158, and Arg-170; that span reads IE.

Belongs to the methyltransferase superfamily. RNA methyltransferase RsmG family.

Its subcellular location is the cytoplasm. It catalyses the reaction guanosine(527) in 16S rRNA + S-adenosyl-L-methionine = N(7)-methylguanosine(527) in 16S rRNA + S-adenosyl-L-homocysteine. Specifically methylates the N7 position of guanine in position 527 of 16S rRNA. The polypeptide is Ribosomal RNA small subunit methyltransferase G (Psychrobacter arcticus (strain DSM 17307 / VKM B-2377 / 273-4)).